A 288-amino-acid polypeptide reads, in one-letter code: HTH-type transcriptional regulator YofA (288 aa).

The HTH lysR-type domain maps to 1 to 58 (MESGDLKIFQAVARKGSISKAAESLHYVQSNVTNRIQQLERQLQTQLFYRTNRGMTLT). The H-T-H motif DNA-binding region spans 18–37 (ISKAAESLHYVQSNVTNRIQ).

The protein belongs to the LysR transcriptional regulatory family.

The protein localises to the cytoplasm. Its function is as follows. Regulates expression of the cell division protein ftsW, and is essential for cell viability during stationary phase. This Bacillus velezensis (strain DSM 23117 / BGSC 10A6 / LMG 26770 / FZB42) (Bacillus amyloliquefaciens subsp. plantarum) protein is HTH-type transcriptional regulator YofA (yofA).